The primary structure comprises 356 residues: Terpene synthase 10 (356 aa).

The DDxx(x)D/E motif motif lies at 90–95; sequence DDYLDS. The short motif at 232–240 is the NDxxSxxxD/E motif element; sequence NDAVSYAKE.

Belongs to the terpene synthase family.

The enzyme catalyses geranylgeranyl diphosphate = beta-araneosene + diphosphate. Terpene synthase that converts its substrate farnesyl diphosphate (FPP) into several unidentified sesquiterpenes. TPS10 also converts geranylgeranyl diphosphate (GGPP) into the diterpene beta-araneosene. The chain is Terpene synthase 10 from Dictyostelium purpureum (Slime mold).